The primary structure comprises 419 residues: UDP-N-acetylglucosamine 1-carboxyvinyltransferase (419 aa).

22–23 (KN) lines the phosphoenolpyruvate pocket. R91 provides a ligand contact to UDP-N-acetyl-alpha-D-glucosamine. C115 acts as the Proton donor in catalysis. At C115 the chain carries 2-(S-cysteinyl)pyruvic acid O-phosphothioketal. UDP-N-acetyl-alpha-D-glucosamine contacts are provided by residues 120-124 (RPVDL), 160-163 (KVSV), D305, and V327.

It belongs to the EPSP synthase family. MurA subfamily.

Its subcellular location is the cytoplasm. It carries out the reaction phosphoenolpyruvate + UDP-N-acetyl-alpha-D-glucosamine = UDP-N-acetyl-3-O-(1-carboxyvinyl)-alpha-D-glucosamine + phosphate. It functions in the pathway cell wall biogenesis; peptidoglycan biosynthesis. Functionally, cell wall formation. Adds enolpyruvyl to UDP-N-acetylglucosamine. In Shigella sonnei (strain Ss046), this protein is UDP-N-acetylglucosamine 1-carboxyvinyltransferase.